Here is a 602-residue protein sequence, read N- to C-terminus: uncharacterized protein (602 aa).

In terms of domain architecture, Helicase ATP-binding spans 51–210 (QYLGTQPRDF…PFVSYQPDAD (160 aa)). The segment covering 430–439 (PHRESAHDPL) has biased composition (basic and acidic residues). Disordered stretches follow at residues 430 to 452 (PHRESAHDPLDGDPATRTQTERG) and 518 to 538 (RAQLQKGATQPATSGASASVH). Residues 523 to 534 (KGATQPATSGAS) are compositionally biased toward polar residues.

This sequence to M.leprae ML1624.

This is an uncharacterized protein from Mycobacterium tuberculosis (strain CDC 1551 / Oshkosh).